A 539-amino-acid polypeptide reads, in one-letter code: ATP synthase subunit beta (539 aa).

The interval 1–44 (MAKTPAEKPATAAKKPAAPKAAAAPKAAAAKAPAAAKAPAAKKP) is disordered. 212–219 (GGAGVGKT) provides a ligand contact to ATP.

This sequence belongs to the ATPase alpha/beta chains family. As to quaternary structure, F-type ATPases have 2 components, CF(1) - the catalytic core - and CF(0) - the membrane proton channel. CF(1) has five subunits: alpha(3), beta(3), gamma(1), delta(1), epsilon(1). CF(0) has three main subunits: a(1), b(2) and c(9-12). The alpha and beta chains form an alternating ring which encloses part of the gamma chain. CF(1) is attached to CF(0) by a central stalk formed by the gamma and epsilon chains, while a peripheral stalk is formed by the delta and b chains.

The protein resides in the cell inner membrane. It catalyses the reaction ATP + H2O + 4 H(+)(in) = ADP + phosphate + 5 H(+)(out). Its function is as follows. Produces ATP from ADP in the presence of a proton gradient across the membrane. The catalytic sites are hosted primarily by the beta subunits. The protein is ATP synthase subunit beta of Caulobacter vibrioides (strain ATCC 19089 / CIP 103742 / CB 15) (Caulobacter crescentus).